The primary structure comprises 585 residues: Pyruvate kinase (585 aa).

Arginine 32 is a binding site for substrate. 4 residues coordinate K(+): asparagine 34, serine 36, aspartate 66, and threonine 67. 34-37 is a binding site for ATP; that stretch reads NFSH. Residues arginine 73 and lysine 156 each contribute to the ATP site. Residue glutamate 222 coordinates Mg(2+). Substrate contacts are provided by glycine 245, aspartate 246, and threonine 278. Aspartate 246 lines the Mg(2+) pocket.

This sequence belongs to the pyruvate kinase family. In the C-terminal section; belongs to the PEP-utilizing enzyme family. Homotetramer. It depends on Mg(2+) as a cofactor. K(+) serves as cofactor.

The enzyme catalyses pyruvate + ATP = phosphoenolpyruvate + ADP + H(+). It participates in carbohydrate degradation; glycolysis; pyruvate from D-glyceraldehyde 3-phosphate: step 5/5. This Bacillus licheniformis protein is Pyruvate kinase (pyk).